Reading from the N-terminus, the 494-residue chain is 3-octaprenyl-4-hydroxybenzoate carboxy-lyase (494 aa).

A Mn(2+)-binding site is contributed by Asn172. Prenylated FMN contacts are provided by residues 175 to 177, 189 to 191, and 194 to 195; these read IYR, RWL, and RG. Glu238 is a Mn(2+) binding site. Asp294 acts as the Proton donor in catalysis.

Belongs to the UbiD family. In terms of assembly, homohexamer. Requires prenylated FMN as cofactor. Mn(2+) is required as a cofactor.

It is found in the cell membrane. It carries out the reaction a 4-hydroxy-3-(all-trans-polyprenyl)benzoate + H(+) = a 2-(all-trans-polyprenyl)phenol + CO2. It participates in cofactor biosynthesis; ubiquinone biosynthesis. Catalyzes the decarboxylation of 3-octaprenyl-4-hydroxy benzoate to 2-octaprenylphenol, an intermediate step in ubiquinone biosynthesis. This is 3-octaprenyl-4-hydroxybenzoate carboxy-lyase from Janthinobacterium sp. (strain Marseille) (Minibacterium massiliensis).